The sequence spans 43 residues: Cytochrome b559 subunit beta (43 aa).

The chain crosses the membrane as a helical span at residues 18–34 (WLAIHGLAIPTVFFLGG). His22 contacts heme.

This sequence belongs to the PsbE/PsbF family. In terms of assembly, heterodimer of an alpha subunit and a beta subunit. PSII is composed of 1 copy each of membrane proteins PsbA, PsbB, PsbC, PsbD, PsbE, PsbF, PsbH, PsbI, PsbJ, PsbK, PsbL, PsbM, PsbT, PsbX, PsbY, PsbZ, Psb30/Ycf12, at least 3 peripheral proteins of the oxygen-evolving complex and a large number of cofactors. It forms dimeric complexes. Requires heme b as cofactor.

It localises to the plastid. The protein localises to the chloroplast thylakoid membrane. Its function is as follows. This b-type cytochrome is tightly associated with the reaction center of photosystem II (PSII). PSII is a light-driven water:plastoquinone oxidoreductase that uses light energy to abstract electrons from H(2)O, generating O(2) and a proton gradient subsequently used for ATP formation. It consists of a core antenna complex that captures photons, and an electron transfer chain that converts photonic excitation into a charge separation. This is Cytochrome b559 subunit beta from Trieres chinensis (Marine centric diatom).